The following is a 474-amino-acid chain: ATP synthase subunit beta (474 aa).

Residue 153 to 160 (GGAGVGKT) participates in ATP binding.

This sequence belongs to the ATPase alpha/beta chains family. F-type ATPases have 2 components, CF(1) - the catalytic core - and CF(0) - the membrane proton channel. CF(1) has five subunits: alpha(3), beta(3), gamma(1), delta(1), epsilon(1). CF(0) has three main subunits: a(1), b(2) and c(9-12). The alpha and beta chains form an alternating ring which encloses part of the gamma chain. CF(1) is attached to CF(0) by a central stalk formed by the gamma and epsilon chains, while a peripheral stalk is formed by the delta and b chains.

Its subcellular location is the cell inner membrane. The enzyme catalyses ATP + H2O + 4 H(+)(in) = ADP + phosphate + 5 H(+)(out). Its function is as follows. Produces ATP from ADP in the presence of a proton gradient across the membrane. The catalytic sites are hosted primarily by the beta subunits. This Rickettsia typhi (strain ATCC VR-144 / Wilmington) protein is ATP synthase subunit beta.